Consider the following 269-residue polypeptide: Regulating synaptic membrane exocytosis protein 4 (269 aa).

Positions 115–233 constitute a C2 domain; it reads PMGDVEIGLQ…DLTTLAVGWY (119 aa). Phosphoserine is present on residues S254 and S257.

Binds PPFIA3. Does not bind RAB3.

It is found in the synapse. Regulates synaptic membrane exocytosis. This Homo sapiens (Human) protein is Regulating synaptic membrane exocytosis protein 4 (RIMS4).